Here is a 341-residue protein sequence, read N- to C-terminus: Protein RecA, plasmid (341 aa).

80-87 (GAESSGKT) provides a ligand contact to ATP.

Belongs to the RecA family.

It is found in the cytoplasm. Its function is as follows. Can catalyze the hydrolysis of ATP in the presence of single-stranded DNA, the ATP-dependent uptake of single-stranded DNA by duplex DNA, and the ATP-dependent hybridization of homologous single-stranded DNAs. It interacts with LexA causing its activation and leading to its autocatalytic cleavage. The polypeptide is Protein RecA, plasmid (Lactococcus lactis subsp. lactis (Streptococcus lactis)).